A 207-amino-acid chain; its full sequence is Small ribosomal subunit protein uS4c (207 aa).

Positions 92–155 (MRLDNILFRL…TYQSILSKRI (64 aa)) constitute an S4 RNA-binding domain.

It belongs to the universal ribosomal protein uS4 family. As to quaternary structure, part of the 30S ribosomal subunit. Contacts protein S5. The interaction surface between S4 and S5 is involved in control of translational fidelity.

It is found in the plastid. It localises to the chloroplast. One of the primary rRNA binding proteins, it binds directly to 16S rRNA where it nucleates assembly of the body of the 30S subunit. Functionally, with S5 and S12 plays an important role in translational accuracy. This Equisetum scirpoides (Dwarf-scouring rush) protein is Small ribosomal subunit protein uS4c (rps4).